The sequence spans 756 residues: 1,4-alpha-glucan branching enzyme GlgB (756 aa).

Asp431 (nucleophile) is an active-site residue. The active-site Proton donor is the Glu484.

This sequence belongs to the glycosyl hydrolase 13 family. GlgB subfamily. Monomer.

It carries out the reaction Transfers a segment of a (1-&gt;4)-alpha-D-glucan chain to a primary hydroxy group in a similar glucan chain.. It participates in glycan biosynthesis; glycogen biosynthesis. Catalyzes the formation of the alpha-1,6-glucosidic linkages in glycogen by scission of a 1,4-alpha-linked oligosaccharide from growing alpha-1,4-glucan chains and the subsequent attachment of the oligosaccharide to the alpha-1,6 position. This is 1,4-alpha-glucan branching enzyme GlgB from Prochlorococcus marinus (strain MIT 9303).